We begin with the raw amino-acid sequence, 422 residues long: G2/mitotic-specific cyclin-A (422 aa).

The segment at 1 to 29 is disordered; that stretch reads MSQPFALHHDGENQMQRRGKMNTRSNGLS.

Belongs to the cyclin family. Cyclin AB subfamily.

In terms of biological role, essential for the control of the cell cycle at the G2/M (mitosis) transition. Interacts with the CDC2 and CDK2 protein kinases to form MPF. G2/M cyclins accumulate steadily during G2 and are abruptly destroyed at mitosis. In Spisula solidissima (Atlantic surf-clam), this protein is G2/mitotic-specific cyclin-A.